The primary structure comprises 512 residues: Norfluorocurarine oxidase (512 aa).

Residues 3–23 (LLLNPSLFSLLPLLLFIIFLF) traverse the membrane as a helical segment. Cysteine 453 serves as a coordination point for heme.

This sequence belongs to the cytochrome P450 family. Heme is required as a cofactor.

It is found in the membrane. It carries out the reaction norfluorocurarine + reduced [NADPH--hemoprotein reductase] + O2 = 18-hydroxynorfluorocurarine + oxidized [NADPH--hemoprotein reductase] + H2O + H(+). The protein operates within alkaloid biosynthesis. In terms of biological role, monooxygenase involved in the biosynthesis of curare monoterpene indole alkaloids (MIAs), natural products such as diaboline, a pharmacologically active compound used to regulate blood pressure. Curare alkaloids act as animal glycine receptor antagonists. Catalyzes the conversion of norfluorocurarine to 18-OH norfluorocurarine. This is Norfluorocurarine oxidase from Strychnos sp.